We begin with the raw amino-acid sequence, 437 residues long: Chromosomal replication initiator protein DnaA (437 aa).

Positions 1–74 (MNLAWNKILE…EACGDKIPVE (74 aa)) are domain I, interacts with DnaA modulators. Positions 74 to 98 (EILIETKATSPLQSFLEKSFDQKDF) are domain II. The tract at residues 99–315 (QFNPDYTFET…GALNDIYLYK (217 aa)) is domain III, AAA+ region. Residues glycine 142, glycine 144, lysine 145, and threonine 146 each contribute to the ATP site. Positions 316–437 (KSYSLLFLNL…ERISSKYKLQ (122 aa)) are domain IV, binds dsDNA.

This sequence belongs to the DnaA family. As to quaternary structure, oligomerizes as a right-handed, spiral filament on DNA at oriC.

It localises to the cytoplasm. In terms of biological role, plays an essential role in the initiation and regulation of chromosomal replication. ATP-DnaA binds to the origin of replication (oriC) to initiate formation of the DNA replication initiation complex once per cell cycle. Binds the DnaA box (a 9 base pair repeat at the origin) and separates the double-stranded (ds)DNA. Forms a right-handed helical filament on oriC DNA; dsDNA binds to the exterior of the filament while single-stranded (ss)DNA is stabiized in the filament's interior. The ATP-DnaA-oriC complex binds and stabilizes one strand of the AT-rich DNA unwinding element (DUE), permitting loading of DNA polymerase. After initiation quickly degrades to an ADP-DnaA complex that is not apt for DNA replication. Binds acidic phospholipids. The polypeptide is Chromosomal replication initiator protein DnaA (Leptospira borgpetersenii serovar Hardjo-bovis (strain JB197)).